Consider the following 101-residue polypeptide: Large ribosomal subunit protein bL28 (101 aa).

The protein belongs to the bacterial ribosomal protein bL28 family.

This chain is Large ribosomal subunit protein bL28, found in Methylorubrum extorquens (strain CM4 / NCIMB 13688) (Methylobacterium extorquens).